The following is a 29-amino-acid chain: NAD-reducing hydrogenase HoxS subunit delta (29 aa).

Basic and acidic residues predominate over residues 1–11; the sequence is MKHSEKNEIAS. Residues 1 to 29 are disordered; the sequence is MKHSEKNEIASHELPTTPLDPVLAAGRES.

This sequence belongs to the [NiFe]/[NiFeSe] hydrogenase small subunit family. In terms of assembly, tetramer of an alpha and a gamma subunits (flavin-containing dimer), and a delta and a nickel-containing beta subunits (hydrogenase dimer). It depends on [4Fe-4S] cluster as a cofactor. [3Fe-4S] cluster is required as a cofactor. [2Fe-2S] cluster serves as cofactor. Requires FMN as cofactor. The cofactor is Ni(2+).

The protein resides in the cytoplasm. It carries out the reaction H2 + NAD(+) = NADH + H(+). The chain is NAD-reducing hydrogenase HoxS subunit delta (hoxY) from Rhodococcus opacus (Nocardia opaca).